The sequence spans 350 residues: Eukaryotic translation initiation factor 3 subunit I (350 aa).

6 WD repeats span residues 8-49 (GHER…GTLE), 51-89 (HQGVIWSIDVDPETHLCATGGGDLAIKLWKVENGQCVYT), 91-135 (DSPS…ATLS), 149-188 (SEGSKATVAGWSGDGDYIIVGHDNGYVSKYDSKTGKLVTS), 198-240 (EKNV…KVYK), and 296-335 (GHFGPLNTVAVHPDGTGYSSGGEDGFIRVHTFDKSYQDFL).

Belongs to the eIF-3 subunit I family. As to quaternary structure, component of the eukaryotic translation initiation factor 3 (eIF-3) complex.

It localises to the cytoplasm. Component of the eukaryotic translation initiation factor 3 (eIF-3) complex, which is involved in protein synthesis of a specialized repertoire of mRNAs and, together with other initiation factors, stimulates binding of mRNA and methionyl-tRNAi to the 40S ribosome. The eIF-3 complex specifically targets and initiates translation of a subset of mRNAs involved in cell proliferation. The protein is Eukaryotic translation initiation factor 3 subunit I of Candida albicans (strain SC5314 / ATCC MYA-2876) (Yeast).